A 938-amino-acid polypeptide reads, in one-letter code: Isoleucine--tRNA ligase (938 aa).

The 'HIGH' region signature appears at 58–68 (PYANGSIHIGH). Glutamate 561 is an L-isoleucyl-5'-AMP binding site. The 'KMSKS' region motif lies at 602-606 (KMSKS). Lysine 605 provides a ligand contact to ATP. Zn(2+) is bound by residues cysteine 901, cysteine 904, cysteine 921, and cysteine 924.

Belongs to the class-I aminoacyl-tRNA synthetase family. IleS type 1 subfamily. As to quaternary structure, monomer. It depends on Zn(2+) as a cofactor.

The protein resides in the cytoplasm. The enzyme catalyses tRNA(Ile) + L-isoleucine + ATP = L-isoleucyl-tRNA(Ile) + AMP + diphosphate. Its function is as follows. Catalyzes the attachment of isoleucine to tRNA(Ile). As IleRS can inadvertently accommodate and process structurally similar amino acids such as valine, to avoid such errors it has two additional distinct tRNA(Ile)-dependent editing activities. One activity is designated as 'pretransfer' editing and involves the hydrolysis of activated Val-AMP. The other activity is designated 'posttransfer' editing and involves deacylation of mischarged Val-tRNA(Ile). The polypeptide is Isoleucine--tRNA ligase (Baumannia cicadellinicola subsp. Homalodisca coagulata).